Here is a 92-residue protein sequence, read N- to C-terminus: Em-like protein GEA6 (92 aa).

2 stretches are compositionally biased toward basic and acidic residues: residues 1-18 (MASQ…KKGE) and 37-51 (AEGR…KEQL). Residues 1–92 (MASQQEKKQL…IDESKFRTKT (92 aa)) form a disordered region.

It belongs to the small hydrophilic plant seed protein family. As to expression, present only in nearly dry and dry seeds.

In terms of biological role, it is thought to provide protection for the cytoplasm during the desiccation stage of embryo development. The chain is Em-like protein GEA6 (EM6) from Arabidopsis thaliana (Mouse-ear cress).